Consider the following 881-residue polypeptide: Putative SWI/SNF-related matrix-associated actin-dependent regulator of chromatin subfamily A member 3-like 1 (881 aa).

The region spanning 272–486 (DKRPDPLRGG…YSLMAFLRFE (215 aa)) is the Helicase ATP-binding domain. An ATP-binding site is contributed by 285-292 (DDMGLGKT). Residues 308-343 (STSTPTEEPLDGEGDKIEKKGKKRGRGKSSESVTRK) are disordered. Residues 437 to 440 (DEAH) carry the DEAH box motif. The segment at 635–674 (CPICISPPTNIIITRCAHIFCRACILQTLQRSKPLCPLCR) adopts an RING-type zinc-finger fold. Residues 681 to 703 (DLYNAPPPPPDSSNTDGEDAKSS) are disordered. A Helicase C-terminal domain is found at 711 to 876 (ALLSLLMASR…EREVNVEDVV (166 aa)).

This sequence belongs to the SNF2/RAD54 helicase family. RAD16 subfamily.

It is found in the nucleus. Functionally, possesses intrinsic ATP-dependent nucleosome-remodeling activity. This activity may be required for transcriptional activation or repression of specific target promoters. This is Putative SWI/SNF-related matrix-associated actin-dependent regulator of chromatin subfamily A member 3-like 1 from Arabidopsis thaliana (Mouse-ear cress).